We begin with the raw amino-acid sequence, 127 residues long: V-type proton ATPase subunit F (127 aa).

This sequence belongs to the V-ATPase F subunit family. V-ATPase is a heteromultimeric enzyme made up of two complexes: the ATP-hydrolytic V1 complex and the proton translocation V0 complex. The V1 complex consists of three catalytic AB heterodimers that form a heterohexamer, three peripheral stalks each consisting of EG heterodimers, one central rotor including subunits D and F, and the regulatory subunits C and H. The proton translocation complex V0 consists of the proton transport subunit a, a ring of proteolipid subunits c9c'', rotary subunit d, subunits e and f, and the accessory subunits VhaAC45 and ATP6AP2.

Subunit of the V1 complex of vacuolar(H+)-ATPase (V-ATPase), a multisubunit enzyme composed of a peripheral complex (V1) that hydrolyzes ATP and a membrane integral complex (V0) that translocates protons. V-ATPase is responsible for acidifying and maintaining the pH of intracellular compartments and in some cell types, is targeted to the plasma membrane, where it is responsible for acidifying the extracellular environment. This Aedes aegypti (Yellowfever mosquito) protein is V-type proton ATPase subunit F.